Reading from the N-terminus, the 569-residue chain is Protein angel homolog 2 (569 aa).

Disordered regions lie at residues 1–22 (MRKG…GVSP), 63–92 (LQHP…WSSW), and 109–155 (GLME…WLRN). Over residues 63–72 (LQHPSSSFST) the composition is skewed to polar residues. Low complexity predominate over residues 139-150 (PPKGSRSPKGSP).

It belongs to the CCR4/nocturin family.

In Danio rerio (Zebrafish), this protein is Protein angel homolog 2 (angel2).